Reading from the N-terminus, the 578-residue chain is Moesin/ezrin/radixin homolog 1 (578 aa).

In terms of domain architecture, FERM spans 1-296 (MSPKALNVRV…GNHELYMRRR (296 aa)). The tract at residues 463-555 (ASTTPQHHHV…HRENVRQGRD (93 aa)) is disordered. Over residues 475-484 (DENENEEELT) the composition is skewed to acidic residues. Basic and acidic residues predominate over residues 492–555 (VSRDLDTDEH…HRENVRQGRD (64 aa)). T559 carries the post-translational modification Phosphothreonine.

Interacts with wgn. Interacts with Mer and arm at the adherens junction. Interacts with cytoskeletal actin at apical buds of microvilli in the precellularised embryo. Interacts with PCID2 (possibly via FERM domain). Phosphorylated on Thr-559. In the oocyte this phosphorylation is induced by phosphatidylinositol 4,5-bisphosphate (PtdIns[4,5]P(2)) generated by sktl.

Its subcellular location is the cell junction. The protein localises to the adherens junction. It is found in the cell projection. The protein resides in the microvillus. It localises to the rhabdomere. Its subcellular location is the cell membrane. The protein localises to the cytoplasm. It is found in the cytoskeleton. The protein resides in the cell cortex. It localises to the cilium. Its subcellular location is the flagellum. The protein localises to the nucleus. It is found in the nucleoplasm. The protein resides in the chromosome. Functionally, involved in connections of major cytoskeletal structures to the plasma membrane. Together with wgn, involved in control of axon targeting of R8 and R2-R5 photoreceptors, independent of egr. In the nucleus, recruited to sites of active transcription by RNA polymerase II where it has a role in nuclear mRNA export together with the mRNA export factor PCID2 and other messenger ribonucleoprotein (mRNP) particles. The chain is Moesin/ezrin/radixin homolog 1 (Moe) from Drosophila melanogaster (Fruit fly).